The chain runs to 520 residues: Ribonuclease Y (520 aa).

A helical membrane pass occupies residues 3-23 (FILVLCTVSSLFVGGGTGIFL). The KH domain maps to 209 to 272 (TVTAVTLPSE…QVAKMALERL (64 aa)). An HD domain is found at 335-429 (VLRHSIEVAS…VQASDCLSGA (95 aa)).

Belongs to the RNase Y family.

It localises to the cell membrane. In terms of biological role, endoribonuclease that initiates mRNA decay. The chain is Ribonuclease Y from Lawsonia intracellularis (strain PHE/MN1-00).